A 101-amino-acid polypeptide reads, in one-letter code: Small ribosomal subunit protein uS17 (101 aa).

The protein belongs to the universal ribosomal protein uS17 family. Part of the 30S ribosomal subunit.

In terms of biological role, one of the primary rRNA binding proteins, it binds specifically to the 5'-end of 16S ribosomal RNA. The sequence is that of Small ribosomal subunit protein uS17 from Koribacter versatilis (strain Ellin345).